A 1248-amino-acid polypeptide reads, in one-letter code: Structural maintenance of chromosomes protein 1B (1248 aa).

An ATP-binding site is contributed by Gly-32–Ser-39. Residues Glu-163–Glu-502 adopt a coiled-coil conformation. In terms of domain architecture, SMC hinge spans Ser-514 to Ala-629. Residues Lys-648, Lys-713, and Lys-1032 each carry the N6-acetyllysine modification. Residues Trp-666–Val-912 adopt a coiled-coil conformation. Basic and acidic residues predominate over residues Pro-1219–Arg-1228. The disordered stretch occupies residues Pro-1219–Arg-1248.

Belongs to the SMC family. SMC1 subfamily. Forms a heterodimer with SMC3. Component of a meiosis-specific cohesin complex, probably composed of the SMC1B and SMC3 heterodimer attached via their SMC hinge domain, RAD21 (or its meiosis-specific related protein REC8), which link them, and STAG3, which interacts with RAD21 or REC8. The cohesin complex interacts with the cohesin loading complex subunits NIPBL/Scc2 (via HEAT repeats) and MAU2/Scc4. NIPBL directly contacts all members of the complex, RAD21, SMC1A/B, SMC3 and STAG1. In terms of tissue distribution, spermatocytes (at protein level). Testis and ovary specific. Not expressed in somatic cells.

Its subcellular location is the nucleus. The protein localises to the chromosome. It localises to the centromere. In terms of biological role, meiosis-specific component of cohesin complex. Required for the maintenance of meiotic cohesion, but not, or only to a minor extent, for its establishment. Contributes to axial element (AE) formation and the organization of chromatin loops along the AE. Plays a key role in synapsis, recombination and chromosome movements. The cohesin complex is required for the cohesion of sister chromatids after DNA replication. The cohesin complex apparently forms a large proteinaceous ring within which sister chromatids can be trapped. At anaphase, the complex is cleaved and dissociates from chromatin, allowing sister chromatids to segregate. The meiosis-specific cohesin complex probably replaces mitosis specific cohesin complex when it dissociates from chromatin during prophase I. In Mus musculus (Mouse), this protein is Structural maintenance of chromosomes protein 1B (Smc1b).